We begin with the raw amino-acid sequence, 243 residues long: Carboxy-S-adenosyl-L-methionine synthase (243 aa).

S-adenosyl-L-methionine-binding positions include Y40, 65–67, 90–91, 118–119, N133, and R200; these read GSS, DN, and DI.

This sequence belongs to the class I-like SAM-binding methyltransferase superfamily. Cx-SAM synthase family. As to quaternary structure, homodimer.

It carries out the reaction prephenate + S-adenosyl-L-methionine = carboxy-S-adenosyl-L-methionine + 3-phenylpyruvate + H2O. Catalyzes the conversion of S-adenosyl-L-methionine (SAM) to carboxy-S-adenosyl-L-methionine (Cx-SAM). The protein is Carboxy-S-adenosyl-L-methionine synthase of Shewanella denitrificans (strain OS217 / ATCC BAA-1090 / DSM 15013).